A 324-amino-acid polypeptide reads, in one-letter code: MSVEDGGVPGLGRPRKARWTLMLLLSTAMYGAHAPLLALCHVDGRVPFRPSSAVLLTELTKLLLCALSLLVGWQAWPQGTPPWRQAAPFALSALLYGANNNLVIYLQRYMDPSTYQVLSNLKIGSTALFYCLCLRHRLSARQGLALLLLMAAGACYAAGGLQDPGTTLPGPPSAAATSPMPLHITPLGLLLLILYCLISGLSSVYTELLMKRQRLPLALQNLFLYSFGVLLNLGLHAGGGPGPGLLEGFSGWMALVVLSQALNGLLMSAVMKHGSSITRLFVVSCSLVVNAVLSAALLRLQLTAAFFLATLLIGLAVRLYYGSR.

Residues 1 to 18 (MSVEDGGVPGLGRPRKAR) are Cytoplasmic-facing. A helical membrane pass occupies residues 19–39 (WTLMLLLSTAMYGAHAPLLAL). Residues 40-52 (CHVDGRVPFRPSS) lie on the Lumenal side of the membrane. The chain crosses the membrane as a helical span at residues 53-73 (AVLLTELTKLLLCALSLLVGW). Residues 74 to 85 (QAWPQGTPPWRQ) lie on the Cytoplasmic side of the membrane. A helical membrane pass occupies residues 86–106 (AAPFALSALLYGANNNLVIYL). Residues 107-141 (QRYMDPSTYQVLSNLKIGSTALFYCLCLRHRLSAR) lie on the Lumenal side of the membrane. Residues 142–162 (QGLALLLLMAAGACYAAGGLQ) traverse the membrane as a helical segment. Topologically, residues 163–180 (DPGTTLPGPPSAAATSPM) are cytoplasmic. Residues 181–201 (PLHITPLGLLLLILYCLISGL) form a helical membrane-spanning segment. The Lumenal segment spans residues 202–214 (SSVYTELLMKRQR). Residues 215-235 (LPLALQNLFLYSFGVLLNLGL) traverse the membrane as a helical segment. Residues 236–248 (HAGGGPGPGLLEG) lie on the Cytoplasmic side of the membrane. Residues 249–271 (FSGWMALVVLSQALNGLLMSAVM) traverse the membrane as a helical segment. Residues 272-275 (KHGS) are Lumenal-facing. Residues 276–298 (SITRLFVVSCSLVVNAVLSAALL) form a helical membrane-spanning segment. The Cytoplasmic segment spans residues 299–324 (RLQLTAAFFLATLLIGLAVRLYYGSR).

Belongs to the nucleotide-sugar transporter family. SLC35A subfamily. In terms of assembly, found in a complex with SLC35A2 and SLC35A3.

Its subcellular location is the golgi apparatus membrane. It catalyses the reaction CDP-L-ribitol(in) + CDP(out) = CDP-L-ribitol(out) + CDP(in). Mediates the transport of CDP-ribitol. Does not exhibit CMP-sialic acid, UDP-galactose and UDP-N-acetylglucosamine transport activity. The protein is Probable UDP-sugar transporter protein SLC35A4 of Bos taurus (Bovine).